Consider the following 534-residue polypeptide: Phosphoenolpyruvate carboxykinase (ATP) (534 aa).

Substrate-binding residues include R58, Y194, and K200. ATP-binding positions include K200, H219, and 235-243; that span reads GLSGTGKTT. Residues K200 and H219 each coordinate Mn(2+). Residue D256 participates in Mn(2+) binding. ATP is bound by residues E284, R322, and T449. R322 is a substrate binding site.

The protein belongs to the phosphoenolpyruvate carboxykinase (ATP) family. The cofactor is Mn(2+).

It localises to the cytoplasm. It catalyses the reaction oxaloacetate + ATP = phosphoenolpyruvate + ADP + CO2. The protein operates within carbohydrate biosynthesis; gluconeogenesis. Involved in the gluconeogenesis. Catalyzes the conversion of oxaloacetate (OAA) to phosphoenolpyruvate (PEP) through direct phosphoryl transfer between the nucleoside triphosphate and OAA. The chain is Phosphoenolpyruvate carboxykinase (ATP) from Novosphingobium aromaticivorans (strain ATCC 700278 / DSM 12444 / CCUG 56034 / CIP 105152 / NBRC 16084 / F199).